Consider the following 86-residue polypeptide: MMRVLIVTAVFTFFLVLTSSGHDEDNEQRNILEGMFLDRAIETPKGLEEKRACGILHDNCVYVPAQNPCCRGLQCRYGKCLVQVGR.

The N-terminal stretch at 1-21 (MMRVLIVTAVFTFFLVLTSSG) is a signal peptide. The propeptide occupies 22–49 (HDEDNEQRNILEGMFLDRAIETPKGLEE). 3 cysteine pairs are disulfide-bonded: Cys53–Cys70, Cys60–Cys75, and Cys69–Cys80. Val84 is modified (valine amide).

In terms of tissue distribution, expressed by the venom gland.

Its subcellular location is the secreted. Possesses strong antiplasmodial activity against the intra-erythrocyte stage of P.falciparum in vitro. IC(50) for inhibiting P.falciparum growth is 1.59 uM. Interacts with infected and healthy erythrocytes. Does not lyse erythrocytes, is not cytotoxic to nucleated mammalian cells, and does not inhibit neuromuscular function. Has neither antibacterial nor antifungal activity. In Psalmopoeus cambridgei (Trinidad chevron tarantula), this protein is U1-theraphotoxin-Pc1a.